Reading from the N-terminus, the 511-residue chain is Bifunctional purine biosynthesis protein PurH (511 aa).

Residues 1–146 (MTKRALVSVS…KNHADVTVVV (146 aa)) form the MGS-like domain.

It belongs to the PurH family.

It carries out the reaction (6R)-10-formyltetrahydrofolate + 5-amino-1-(5-phospho-beta-D-ribosyl)imidazole-4-carboxamide = 5-formamido-1-(5-phospho-D-ribosyl)imidazole-4-carboxamide + (6S)-5,6,7,8-tetrahydrofolate. It catalyses the reaction IMP + H2O = 5-formamido-1-(5-phospho-D-ribosyl)imidazole-4-carboxamide. Its pathway is purine metabolism; IMP biosynthesis via de novo pathway; 5-formamido-1-(5-phospho-D-ribosyl)imidazole-4-carboxamide from 5-amino-1-(5-phospho-D-ribosyl)imidazole-4-carboxamide (10-formyl THF route): step 1/1. It participates in purine metabolism; IMP biosynthesis via de novo pathway; IMP from 5-formamido-1-(5-phospho-D-ribosyl)imidazole-4-carboxamide: step 1/1. This is Bifunctional purine biosynthesis protein PurH from Shouchella clausii (strain KSM-K16) (Alkalihalobacillus clausii).